Reading from the N-terminus, the 546-residue chain is Medium-chain-fatty-acid--CoA ligase (546 aa).

A Mg(2+)-binding site is contributed by T185. Residues W235 and T329 each coordinate ATP. Mg(2+) is bound at residue E330. D417, K434, K438, and W443 together coordinate ATP.

This sequence belongs to the ATP-dependent AMP-binding enzyme family.

Its subcellular location is the cytoplasm. The catalysed reaction is a medium-chain fatty acid + ATP + CoA = a medium-chain fatty acyl-CoA + AMP + diphosphate. Its pathway is lipid metabolism; fatty acid metabolism. This Ectopseudomonas oleovorans (Pseudomonas oleovorans) protein is Medium-chain-fatty-acid--CoA ligase.